A 209-amino-acid polypeptide reads, in one-letter code: Response regulator protein VraR (209 aa).

The Response regulatory domain maps to K4 to S120. D55 carries the 4-aspartylphosphate modification. An HTH luxR-type domain is found at R141–N206. Residues N165–S184 constitute a DNA-binding region (H-T-H motif).

Homodimer. In terms of processing, phosphorylated by VraS. Phosphorylation state of VraR controls dimerization of the protein.

The protein resides in the cytoplasm. Member of the two-component regulatory system VraS/VraR involved in the control of the cell wall peptidoglycan biosynthesis. Upon cellular stress, the histidine kinase VraS transfers the phosphoryl group onto VraR. Upon phosphorylation, VraR dimerizes at the N-terminal domain. In turn, phosphorylation-induced dimerization expands and enhances the VraR binding to its own promoter leading to increased expression and subsequent modulation of as many as 40 genes, which ultimately constitute the S.aureus response to cell wall damage. In addition, inhibits the host autophagic flux and delays the early stage of autophagosome formation, thereby promoting bacterial survival. Facilitates the ability of S.aureus to resist host polymorphonuclear leukocytes-mediated phagocytosis and killing thus contributing to immune evasion. The protein is Response regulator protein VraR (vraR) of Staphylococcus aureus (strain Mu3 / ATCC 700698).